The chain runs to 309 residues: Ribonuclease Z (309 aa).

Zn(2+)-binding residues include H63, H65, D67, H68, H145, D216, and H274. The Proton acceptor role is filled by D67.

Belongs to the RNase Z family. As to quaternary structure, homodimer. It depends on Zn(2+) as a cofactor.

It catalyses the reaction Endonucleolytic cleavage of RNA, removing extra 3' nucleotides from tRNA precursor, generating 3' termini of tRNAs. A 3'-hydroxy group is left at the tRNA terminus and a 5'-phosphoryl group is left at the trailer molecule.. Zinc phosphodiesterase, which displays some tRNA 3'-processing endonuclease activity. Probably involved in tRNA maturation, by removing a 3'-trailer from precursor tRNA. This chain is Ribonuclease Z, found in Streptococcus mutans serotype c (strain ATCC 700610 / UA159).